A 232-amino-acid chain; its full sequence is 26.5 kDa heat shock protein, mitochondrial (232 aa).

The transit peptide at 1-42 directs the protein to the mitochondrion; the sequence is MALARLALRNLQQKLSPSLMGQSCERGLVGNRHNPMKLNRFM. A disordered region spans residues 44–82; sequence TSAGEQEDKMNTEVSVSEKKSPRQNFPRRRGRKSLWRNT. The segment covering 49–64 has biased composition (basic and acidic residues); it reads QEDKMNTEVSVSEKKS. Positions 69–78 are enriched in basic residues; the sequence is FPRRRGRKSL. One can recognise a sHSP domain in the interval 114 to 232; sequence IFDNFNVNPF…KKNVQEISVE (119 aa).

This sequence belongs to the small heat shock protein (HSP20) family. In terms of assembly, may form oligomeric structures.

It is found in the mitochondrion. This is 26.5 kDa heat shock protein, mitochondrial (HSP26.5) from Arabidopsis thaliana (Mouse-ear cress).